A 128-amino-acid polypeptide reads, in one-letter code: Protein Wnt-8 (128 aa).

A lipid anchor (O-palmitoleoyl serine) is attached at S1. 2 disulfides stabilise this stretch: C69–C109 and C85–C102. N72 carries N-linked (GlcNAc...) asparagine glycosylation.

It belongs to the Wnt family. Post-translationally, palmitoleoylation is required for efficient binding to frizzled receptors. Depalmitoleoylation leads to Wnt signaling pathway inhibition. Proteolytic processing by tiki1 and tiki2 promotes oxidation and formation of large disulfide-bond oligomers, leading to inactivation of wnt8.

It localises to the secreted. The protein localises to the extracellular space. The protein resides in the extracellular matrix. In terms of biological role, ligand for members of the frizzled family of seven transmembrane receptors. Probable developmental protein. May be a signaling molecule which affects the development of discrete regions of tissues. Is likely to signal over only few cell diameters. The polypeptide is Protein Wnt-8 (WNT-8) (Evasterias troschelii (Mottled sea star)).